Reading from the N-terminus, the 574-residue chain is uncharacterized protein (574 aa).

11 helical membrane-spanning segments follow: residues 14–34, 54–74, 124–144, 205–225, 253–273, 323–343, 350–370, 403–423, 441–461, 485–505, and 520–540; these read FFPT…LFFG, VVPL…LGIV, WLMA…SDTA, ICKC…TGTI, SWMA…WFIV, LVIF…VIPG, KGYV…FIWP, FPWS…AVRV, MPFF…TEFS, PLYF…LPMA, and MIDM…ITAI. N-linked (GlcNAc...) asparagine glycans are attached at residues Asn565 and Asn569.

The protein belongs to the SLC13A/DASS transporter (TC 2.A.47) family. NADC subfamily.

Its subcellular location is the membrane. This is an uncharacterized protein from Caenorhabditis elegans.